The following is a 365-amino-acid chain: Phospho-N-acetylmuramoyl-pentapeptide-transferase (365 aa).

Helical transmembrane passes span 2-22 (ISLI…TPLL), 51-71 (TLGG…SALY), 80-100 (PSWS…LGFI), 118-138 (GKFI…LILP), 167-187 (VAIV…TNAI), 196-216 (LAAG…FWEF), 234-254 (PLDL…FLWY), 256-276 (SNPA…GLFA), 277-297 (AMSI…LFVI), and 340-360 (FWMI…GDWV).

This sequence belongs to the glycosyltransferase 4 family. MraY subfamily. Requires Mg(2+) as cofactor.

The protein localises to the cell membrane. It catalyses the reaction UDP-N-acetyl-alpha-D-muramoyl-L-alanyl-gamma-D-glutamyl-meso-2,6-diaminopimeloyl-D-alanyl-D-alanine + di-trans,octa-cis-undecaprenyl phosphate = di-trans,octa-cis-undecaprenyl diphospho-N-acetyl-alpha-D-muramoyl-L-alanyl-D-glutamyl-meso-2,6-diaminopimeloyl-D-alanyl-D-alanine + UMP. It participates in cell wall biogenesis; peptidoglycan biosynthesis. Its function is as follows. Catalyzes the initial step of the lipid cycle reactions in the biosynthesis of the cell wall peptidoglycan: transfers peptidoglycan precursor phospho-MurNAc-pentapeptide from UDP-MurNAc-pentapeptide onto the lipid carrier undecaprenyl phosphate, yielding undecaprenyl-pyrophosphoryl-MurNAc-pentapeptide, known as lipid I. This is Phospho-N-acetylmuramoyl-pentapeptide-transferase from Bifidobacterium adolescentis (strain ATCC 15703 / DSM 20083 / NCTC 11814 / E194a).